Consider the following 256-residue polypeptide: Alcohol dehydrogenase (256 aa).

S2 bears the N-acetylserine mark. NAD(+) is bound by residues 12–41 (FVAG…LDRI) and D65. S140 contributes to the substrate binding site. The active-site Proton acceptor is Y153. K157 serves as a coordination point for NAD(+).

It belongs to the short-chain dehydrogenases/reductases (SDR) family. Homodimer.

The catalysed reaction is a primary alcohol + NAD(+) = an aldehyde + NADH + H(+). It carries out the reaction a secondary alcohol + NAD(+) = a ketone + NADH + H(+). With respect to regulation, inhibited by 2,2,2-trifluoroethanol and pyrazole. This chain is Alcohol dehydrogenase (Adh), found in Drosophila melanogaster (Fruit fly).